The sequence spans 911 residues: Golgin IMH1 (911 aa).

2 disordered regions span residues 16–41 and 271–314; these read LAKG…SGLP and KELP…ETVD. A coiled-coil region spans residues 101-280; it reads FFQDLNNKNN…KELPKAISHQ (180 aa). Basic residues predominate over residues 286–299; that stretch reads NRRKKNRNKGKKNK. Serine 308 and serine 660 each carry phosphoserine. Coiled coils occupy residues 312–735 and 766–814; these read TVDN…ALKH and SKAD…KERQ. The interval 814-850 is disordered; sequence QYSDKSGRVSRSGSIGTLANANIDSSPANNSNPTKLE. The segment covering 822-847 has biased composition (polar residues); the sequence is VSRSGSIGTLANANIDSSPANNSNPT. Serine 827 is subject to Phosphoserine. Phosphothreonine is present on threonine 830. One can recognise a GRIP domain in the interval 861–909; sequence DSEKNEKIAYIKNVLLGFLEHKEQRNQLLPVISMLLQLDSTDEKRLVMS.

Forms oligomers and is present in high-molecular-mass complexes. Interacts with ARL1.

Its subcellular location is the cytoplasm. The protein localises to the golgi apparatus membrane. In terms of biological role, involved in vesicular transport between an endosomal compartment and the Golgi apparatus. This is Golgin IMH1 (IMH1) from Saccharomyces cerevisiae (strain ATCC 204508 / S288c) (Baker's yeast).